The following is an 860-amino-acid chain: Leucine--tRNA ligase (860 aa).

The 'HIGH' region signature appears at 42-52; that stretch reads PYPSGRLHMGH. The 'KMSKS' region signature appears at 619-623; that stretch reads KMSKS. Residue Lys-622 coordinates ATP.

Belongs to the class-I aminoacyl-tRNA synthetase family.

It is found in the cytoplasm. It carries out the reaction tRNA(Leu) + L-leucine + ATP = L-leucyl-tRNA(Leu) + AMP + diphosphate. The sequence is that of Leucine--tRNA ligase from Escherichia coli (strain 55989 / EAEC).